Here is a 389-residue protein sequence, read N- to C-terminus: Chalcone synthase 1 (389 aa).

Cysteine 164 is a catalytic residue.

The protein belongs to the thiolase-like superfamily. Chalcone/stilbene synthases family.

It catalyses the reaction (E)-4-coumaroyl-CoA + 3 malonyl-CoA + 3 H(+) = 2',4,4',6'-tetrahydroxychalcone + 3 CO2 + 4 CoA. It participates in secondary metabolite biosynthesis; flavonoid biosynthesis. Functionally, the primary product of this enzyme is 4,2',4',6'-tetrahydroxychalcone (also termed naringenin-chalcone or chalcone) which can under specific conditions spontaneously isomerize into naringenin. The protein is Chalcone synthase 1 (CHS1) of Daucus carota (Wild carrot).